The chain runs to 597 residues: Translation initiation factor IF-2 (597 aa).

Low complexity-rich tracts occupy residues 57 to 73 and 81 to 95; these read GGDA…AATA and TPAA…PASD. A disordered region spans residues 57 to 96; the sequence is GGDAAPAAASAPAAATAEPEEADETPAAAAQADAEPASDL. In terms of domain architecture, tr-type G spans 98–271; sequence HRAPVVTIMG…ELEDLRADPK (174 aa). The tract at residues 107 to 114 is G1; the sequence is GHVDHGKT. 107–114 is a GTP binding site; sequence GHVDHGKT. The G2 stretch occupies residues 132–136; the sequence is GITQH. The segment at 153–156 is G3; the sequence is DTPG. Residues 153-157 and 207-210 each bind GTP; these read DTPGH and NKVD. The G4 stretch occupies residues 207-210; it reads NKVD. The G5 stretch occupies residues 243-245; that stretch reads SAK.

The protein belongs to the TRAFAC class translation factor GTPase superfamily. Classic translation factor GTPase family. IF-2 subfamily.

The protein resides in the cytoplasm. Its function is as follows. One of the essential components for the initiation of protein synthesis. Protects formylmethionyl-tRNA from spontaneous hydrolysis and promotes its binding to the 30S ribosomal subunits. Also involved in the hydrolysis of GTP during the formation of the 70S ribosomal complex. The chain is Translation initiation factor IF-2 from Deinococcus radiodurans (strain ATCC 13939 / DSM 20539 / JCM 16871 / CCUG 27074 / LMG 4051 / NBRC 15346 / NCIMB 9279 / VKM B-1422 / R1).